A 1137-amino-acid polypeptide reads, in one-letter code: Protein sel-1 homolog 3 (1137 aa).

The tract at residues 1–42 is disordered; sequence MQWRGAGLWWPRRRQQQQQQQPPPPAFGPPAAAMVPPSRGVS. N-linked (GlcNAc...) asparagine glycans are attached at residues asparagine 206 and asparagine 387. Sel1-like repeat units lie at residues 575-609, 611-647, 694-730, 732-767, 768-800, 801-839, and 840-877; these read HKASYYLTVFYETGLNGPRDQLQGMLYSLVGGQGS, RLSSMNLGYKHYQGVDSYPLDWELSYAYYSNIATKTP, AAAQQRLAQMLFWGQQGVAKNPEAAIEWYAKGALETE, PALIYDYAIVLFKGQGVKKNRRLALELMKKAASKGL, HQAVNGLGWYYHKFRKNYAKAAKYWLKAEEMGN, PDASYNLGVLYLDGIFPGVPGRNLTLAGEYFHKAAQGGH, and IEGTLWCSLYYITGNLETFPRDPEKAVVWAKHVAEKNG. Serine 613 bears the Phosphoserine mark. A glycan (N-linked (GlcNAc...) asparagine) is linked at asparagine 942. One copy of the Sel1-like 8 repeat lies at 952 to 988; it reads SFAYLKMGDLYYYGHQNQSQDLELSVQMYAQAALDGD. The helical transmembrane segment at 1067 to 1087 threads the bilayer; it reads LIYFLGTFLLSVVIAWMVLYL. The interval 1100–1137 is disordered; the sequence is AWVSADPTSSTPSPAVPPAADASDHDPPMMANGPEPRG. Residues 1102–1120 are compositionally biased toward low complexity; the sequence is VSADPTSSTPSPAVPPAAD.

It is found in the membrane. This Mus musculus (Mouse) protein is Protein sel-1 homolog 3 (Sel1l3).